The chain runs to 657 residues: Hemocyanin B chain (657 aa).

The cysteines at positions 93 and 98 are disulfide-linked. Asn167 carries an N-linked (GlcNAc...) asparagine glycan. The Cu cation site is built by His194, His198, His224, His344, His348, and His384. 2 cysteine pairs are disulfide-bonded: Cys483–Cys502 and Cys562–Cys609.

It belongs to the tyrosinase family. Hemocyanin subfamily. Hexamer of a number of different chains, of which A, B, and C have been identified. In terms of tissue distribution, hemolymph.

Its subcellular location is the secreted. The protein localises to the extracellular space. Its function is as follows. Hemocyanins are copper-containing oxygen carriers occurring freely dissolved in the hemolymph of many mollusks and arthropods. This is Hemocyanin B chain from Panulirus interruptus (California spiny lobster).